We begin with the raw amino-acid sequence, 651 residues long: Bromodomain-containing protein 7 (651 aa).

Lysine 21 participates in a covalent cross-link: Glycyl lysine isopeptide (Lys-Gly) (interchain with G-Cter in SUMO2). The segment covering 35–45 has biased composition (polar residues); that stretch reads TELSTGSSGHD. A disordered region spans residues 35–132; the sequence is TELSTGSSGH…SSLAKQEEVE (98 aa). Positions 47–57 are enriched in basic and acidic residues; the sequence is SLFEDKNDHDK. Residue lysine 52 forms a Glycyl lysine isopeptide (Lys-Gly) (interchain with G-Cter in SUMO2) linkage. Residues 58–69 are compositionally biased toward basic residues; that stretch reads HKDRKRKKRKKG. The Nuclear localization signal motif lies at 65-96; sequence KRKKGEKQIPGEEKGRKRRRVKEDKKKRDRDR. The span at 70-106 shows a compositional bias: basic and acidic residues; the sequence is EKQIPGEEKGRKRRRVKEDKKKRDRDRVENEAEKDLQ. Residues lysine 127, lysine 186, lysine 197, lysine 201, lysine 212, and lysine 241 each participate in a glycyl lysine isopeptide (Lys-Gly) (interchain with G-Cter in SUMO2) cross-link. A Bromo domain is found at 131-235; it reads VEQTPLQEAL…HSGMKILSQE (105 aa). A disordered region spans residues 253-301; it reads TRKQKDGTDTSQSGEDGGCWQREREDSGDAEAHAFKSPSKENKKKDKDM. Basic and acidic residues predominate over residues 273–301; sequence QREREDSGDAEAHAFKSPSKENKKKDKDM. Phosphoserine is present on residues serine 279 and serine 289. Glycyl lysine isopeptide (Lys-Gly) (interchain with G-Cter in SUMO2) cross-links involve residues lysine 305 and lysine 307. Lysine 328 is subject to N6-acetyllysine. Lysine 344 is covalently cross-linked (Glycyl lysine isopeptide (Lys-Gly) (interchain with G-Cter in SUMO2)). The residue at position 380 (serine 380) is a Phosphoserine. A Glycyl lysine isopeptide (Lys-Gly) (interchain with G-Cter in SUMO2) cross-link involves residue lysine 389. The residue at position 482 (serine 482) is a Phosphoserine. Residue threonine 514 is modified to Phosphothreonine. A coiled-coil region spans residues 536-567; the sequence is SEEAEIFQKKLDETTRLLRELQEAQNERLSTR. Residue serine 621 is modified to Phosphoserine.

In terms of assembly, interacts with TRIM24, PTPN13 and DVL1. Identified in a complex with SMARCA4/BRG1, SMARCC1/BAF155, SMARCE1/BAF57, DPF2/BAF45D and ARID2, subunits of the SWI/SNF-B (PBAF) chromatin remodeling complex. Interacts with IRF2 and HNRPUL1. Interacts (via N-terminus) with TP53. Interacts (via C-terminus) with EP300. Interacts with BRCA1. Interacts (via bromo domain) with histone H3 (via N-terminus) acetylated at 'Lys-14' (H3K14ac). Has low affinity for histone H3 acetylated at 'Lys-9' (H3K9ac). Has the highest affinity for histone H3 that is acetylated both at 'Lys-9' (H3K9ac) and at 'Lys-14' (H3K14ac). Has very low affinity for non-acetylated histone H3. Interacts (via bromo domain) with histone H4 (via N-terminus) acetylated at 'Lys-8' (H3K8ac) (in vitro).

The protein localises to the nucleus. It is found in the chromosome. Its function is as follows. Acts both as coactivator and as corepressor. May play a role in chromatin remodeling. Activator of the Wnt signaling pathway in a DVL1-dependent manner by negatively regulating the GSK3B phosphotransferase activity. Induces dephosphorylation of GSK3B at 'Tyr-216'. Down-regulates TRIM24-mediated activation of transcriptional activation by AR. Transcriptional corepressor that down-regulates the expression of target genes. Binds to target promoters, leading to increased histone H3 acetylation at 'Lys-9' (H3K9ac). Binds to the ESR1 promoter. Recruits BRCA1 and POU2F1 to the ESR1 promoter. Coactivator for TP53-mediated activation of transcription of a set of target genes. Required for TP53-mediated cell-cycle arrest in response to oncogene activation. Promotes acetylation of TP53 at 'Lys-382', and thereby promotes efficient recruitment of TP53 to target promoters. Inhibits cell cycle progression from G1 to S phase. This chain is Bromodomain-containing protein 7 (BRD7), found in Homo sapiens (Human).